The following is a 592-amino-acid chain: Arginine--tRNA ligase (592 aa).

Positions 129–139 (ANPTGPLHVGH) match the 'HIGH' region motif.

Belongs to the class-I aminoacyl-tRNA synthetase family. Monomer.

It is found in the cytoplasm. It catalyses the reaction tRNA(Arg) + L-arginine + ATP = L-arginyl-tRNA(Arg) + AMP + diphosphate. This is Arginine--tRNA ligase from Dichelobacter nodosus (strain VCS1703A).